The primary structure comprises 316 residues: M-phase inducer phosphatase cdc-25.3 (316 aa).

The segment at 35 to 65 is disordered; that stretch reads QNRQHSSAISHISNSSPPTRKRSIDGGYTSG. Residues 39–50 are compositionally biased toward low complexity; it reads HSSAISHISNSS. The 107-residue stretch at 136 to 242 folds into the Rhodanese domain; it reads FMQKYILIDC…FYAFTRGLEK (107 aa).

This sequence belongs to the MPI phosphatase family.

The enzyme catalyses O-phospho-L-tyrosyl-[protein] + H2O = L-tyrosyl-[protein] + phosphate. This chain is M-phase inducer phosphatase cdc-25.3 (cdc-25.3), found in Caenorhabditis elegans.